A 351-amino-acid polypeptide reads, in one-letter code: Phosphoribosylformylglycinamidine cyclo-ligase (351 aa).

It belongs to the AIR synthase family.

The protein localises to the cytoplasm. It catalyses the reaction 2-formamido-N(1)-(5-O-phospho-beta-D-ribosyl)acetamidine + ATP = 5-amino-1-(5-phospho-beta-D-ribosyl)imidazole + ADP + phosphate + H(+). It participates in purine metabolism; IMP biosynthesis via de novo pathway; 5-amino-1-(5-phospho-D-ribosyl)imidazole from N(2)-formyl-N(1)-(5-phospho-D-ribosyl)glycinamide: step 2/2. This chain is Phosphoribosylformylglycinamidine cyclo-ligase, found in Burkholderia pseudomallei (strain 668).